Consider the following 403-residue polypeptide: Sex hormone-binding globulin (403 aa).

Residues 1–30 form the signal peptide; the sequence is MEKGEVASLRCRLLLLLLLLTLPPTHQGRT. 2 consecutive Laminin G-like domains span residues 46–218 and 225–391; these read KYLS…LGNC and GLFF…THSC. Cysteine 194 and cysteine 218 form a disulfide bridge. Asparagine 274 carries an N-linked (GlcNAc...) asparagine glycan. A disulfide bridge links cysteine 363 with cysteine 391. N-linked (GlcNAc...) asparagine glycosylation occurs at asparagine 397.

Homodimer. Isoform 2 is only expressed in the liver.

Its subcellular location is the secreted. In terms of biological role, functions as an androgen transport protein, but may also be involved in receptor mediated processes. Each dimer binds one molecule of steroid. Specific for 5-alpha-dihydrotestosterone, testosterone, and 17-beta-estradiol. Regulates the plasma metabolic clearance rate of steroid hormones by controlling their plasma concentration. The sequence is that of Sex hormone-binding globulin (Shbg) from Rattus norvegicus (Rat).